Here is a 241-residue protein sequence, read N- to C-terminus: Methylthioribulose-1-phosphate dehydratase (241 aa).

Cys-100 contributes to the substrate binding site. The Zn(2+) site is built by His-117 and His-119. Glu-146 (proton donor/acceptor) is an active-site residue. His-202 contacts Zn(2+).

This sequence belongs to the aldolase class II family. MtnB subfamily. Zn(2+) is required as a cofactor.

It is found in the cytoplasm. It carries out the reaction 5-(methylsulfanyl)-D-ribulose 1-phosphate = 5-methylsulfanyl-2,3-dioxopentyl phosphate + H2O. It functions in the pathway amino-acid biosynthesis; L-methionine biosynthesis via salvage pathway; L-methionine from S-methyl-5-thio-alpha-D-ribose 1-phosphate: step 2/6. Its function is as follows. Catalyzes the dehydration of methylthioribulose-1-phosphate (MTRu-1-P) into 2,3-diketo-5-methylthiopentyl-1-phosphate (DK-MTP-1-P). The sequence is that of Methylthioribulose-1-phosphate dehydratase from Ajellomyces dermatitidis (strain ER-3 / ATCC MYA-2586) (Blastomyces dermatitidis).